The following is a 1821-amino-acid chain: Latent-transforming growth factor beta-binding protein 2 (1821 aa).

Residues 1–35 form the signal peptide; it reads MRPRTKARSPGRALRNPWRGFLPLTLALFVGAGHA. Disordered stretches follow at residues 38-58 and 81-165; these read DPVGRYEPAGGDANRLRRPGG and GLQP…RLTG. Residues 94 to 115 are heparin-binding; the sequence is SPRRPTEAEARRPSRAQQSRRV. 2 stretches are compositionally biased toward low complexity: residues 108–120 and 129–145; these read RAQQSRRVQPPAQ and QQQPAPRTRAAPALPRL. Residue Asn181 is glycosylated (N-linked (GlcNAc...) asparagine). Residues 187-219 enclose the EGF-like 1 domain; the sequence is IKPVCEPPCQNRGSCSRPQLCVCRSGFRGARCE. 3 cysteine pairs are disulfide-bonded: Cys191–Cys201, Cys195–Cys207, and Cys209–Cys218. Residues 229–339 form a disordered region; sequence PQNSRLAPRR…AVPLEHPSSP (111 aa). Residues 232–249 are heparin-binding; it reads SRLAPRRWAERSPNLRRS. The span at 262–274 shows a compositional bias: pro residues; it reads PPAPQSPPAPQSP. Composition is skewed to polar residues over residues 280 to 292 and 304 to 314; these read SGLSQTHPSQQHV and ATASSQLSSNA. Asn343 is a glycosylation site (N-linked (GlcNAc...) asparagine). Position 344–354 (344–354) interacts with heparin; the sequence is LTEKIKKIKIV. Residues 375 to 377 carry the Cell attachment site motif; sequence RGD. An EGF-like 2 domain is found at 396–428; sequence RIYFCQIPCLNGGRCIGRDECWCPANSTGKFCH. Intrachain disulfides connect Cys400/Cys410, Cys404/Cys416, and Cys418/Cys427. A glycan (N-linked (GlcNAc...) asparagine) is linked at Asn421. Residue Ser506 is modified to Phosphoserine. The disordered stretch occupies residues 510–544; sequence RPPPWLPASPGHSLWDSNNIPARSGEPPRPLPPAA. Positions 552–604 constitute a TB 1 domain; the sequence is GRCYLNTVNGQCANPLLELTTQEDCCGSVGAFWGVTLCAPCPPRPASPVIENG. Disulfide bonds link Cys554–Cys576, Cys563–Cys589, and Cys577–Cys592. The N-linked (GlcNAc...) asparagine glycan is linked to Asn616. In terms of domain architecture, EGF-like 3; calcium-binding spans 622 to 662; the sequence is DINECLTLGLCKDAECVNTRGSYLCTCRPGLMLDPSRSRCV. 7 disulfides stabilise this stretch: Cys626/Cys637, Cys632/Cys646, Cys648/Cys661, Cys674/Cys696, Cys683/Cys709, Cys697/Cys712, and Cys698/Cys724. A TB 2 domain is found at 672–724; the sequence is GLCYRSLGPGTCTLPLAQRITKQICCCSRVGKAWGSECEKCPLPGTEAFREIC. A compositionally biased stretch (basic and acidic residues) spans 744–757; it reads AEEEELARPPREQG. The disordered stretch occupies residues 744–772; it reads AEEEELARPPREQGQRSSGALPGPAERQP. An N-linked (GlcNAc...) asparagine glycan is attached at Asn811. One can recognise an EGF-like 4 domain in the interval 844–886; sequence GIDRCAAGATNVCGPGTCVNLPDGYRCVCSPGYQLHPSQAYCT. Cystine bridges form between Cys848/Cys861, Cys856/Cys870, Cys872/Cys885, Cys891/Cys902, Cys896/Cys911, Cys913/Cys928, Cys934/Cys945, Cys940/Cys954, Cys956/Cys968, Cys974/Cys985, Cys980/Cys994, Cys997/Cys1008, Cys1014/Cys1025, Cys1020/Cys1034, Cys1036/Cys1049, Cys1055/Cys1066, Cys1061/Cys1075, Cys1078/Cys1091, Cys1097/Cys1108, Cys1103/Cys1117, Cys1120/Cys1133, Cys1139/Cys1151, Cys1146/Cys1160, Cys1162/Cys1174, Cys1180/Cys1192, Cys1186/Cys1201, Cys1203/Cys1216, Cys1222/Cys1233, Cys1228/Cys1242, Cys1244/Cys1257, Cys1263/Cys1276, Cys1271/Cys1285, Cys1289/Cys1301, Cys1307/Cys1319, Cys1313/Cys1328, Cys1330/Cys1343, Cys1349/Cys1361, Cys1356/Cys1370, Cys1372/Cys1386, Cys1413/Cys1436, Cys1423/Cys1448, Cys1437/Cys1451, Cys1438/Cys1463, Cys1489/Cys1502, Cys1497/Cys1511, Cys1513/Cys1526, Cys1532/Cys1542, Cys1537/Cys1551, and Cys1553/Cys1566. One can recognise an EGF-like 5; calcium-binding domain in the interval 887–929; the sequence is DDNECLRDPCKGKGRCINRVGSYSCFCYPGYTLATSGATQECQ. Positions 930–969 constitute an EGF-like 6; calcium-binding domain; that stretch reads DINECEQPGVCSGGQCTNTEGSYHCECDQGYIMVRKGHCQ. The EGF-like 7; calcium-binding domain maps to 970–1009; it reads DINECRHPGTCPDGRCVNSPGSYTCLACEEGYRGQSGSCV. The EGF-like 8; calcium-binding domain maps to 1010–1050; the sequence is DVNECLTPGVCAHGKCTNLEGSFRCSCEQGYEVTSDEKGCQ. Positions 1051-1092 constitute an EGF-like 9; calcium-binding domain; the sequence is DVDECASRASCPTGLCLNTEGSFACSACENGYWVNEDGTACE. Positions 1093-1134 constitute an EGF-like 10; calcium-binding domain; the sequence is DLDECAFPGVCPSGVCTNTAGSFSCKDCDGGYRPSPLGDSCE. In terms of domain architecture, EGF-like 11; calcium-binding spans 1135–1175; that stretch reads DVDECEDPQSSCLGGECKNTVGSYQCLCPQGFQLANGTVCE. Asn1170 carries an N-linked (GlcNAc...) asparagine glycan. Residues 1176-1217 form the EGF-like 12; calcium-binding domain; it reads DVNECMGEEHCAPHGECLNSHGSFFCLCAPGFVSAEGGTSCQ. Positions 1218–1258 constitute an EGF-like 13; calcium-binding domain; the sequence is DVDECATTDPCVGGHCVNTEGSFNCLCETGFQPSPESGECV. One can recognise an EGF-like 14; calcium-binding domain in the interval 1259 to 1302; the sequence is DIDECEDYGDPVCGTWKCENSPGSYRCVLGCQPGFHMAPNGDCI. Residues 1303–1344 enclose the EGF-like 15; calcium-binding domain; the sequence is DIDECANDTMCGSHGFCDNTDGSFRCLCDQGFEISPSGWDCV. N-linked (GlcNAc...) asparagine glycosylation is present at Asn1309. One can recognise an EGF-like 16; calcium-binding domain in the interval 1345-1387; sequence DVNECELMLAVCGAALCENVEGSFLCLCASDLEEYDAQEGHCR. Residues 1411–1463 enclose the TB 3 domain; that stretch reads MDCYSGQKGHAPCSSVLGRNTTQAECCCTQGASWGDACDLCPSEDSAEFSEIC. A glycan (N-linked (GlcNAc...) asparagine) is linked at Asn1430. One can recognise an EGF-like 17; calcium-binding domain in the interval 1485–1527; the sequence is DADECVIFGPGLCPNGRCLNTVPGYVCLCNPGFHYDASHKKCE. Positions 1528–1567 constitute an EGF-like 18; calcium-binding domain; the sequence is DHDECQDLACENGECVNTEGSFHCFCSPPLTLDLSQQRCM. N-linked (GlcNAc...) asparagine glycosylation is present at Asn1568. The TB 4 domain occupies 1584–1636; sequence DICWKKVTNDVCSEPLRGHRTTYTECCCQDGEAWSQQCALCPPRSSEVYAQLC. 10 cysteine pairs are disulfide-bonded: Cys1586-Cys1609, Cys1595-Cys1621, Cys1610-Cys1624, Cys1611-Cys1636, Cys1737-Cys1748, Cys1743-Cys1757, Cys1759-Cys1772, Cys1778-Cys1793, Cys1788-Cys1802, and Cys1804-Cys1817. Residues 1639 to 1821 are C-terminal domain; that stretch reads ARIEAEREAG…AGPPHCTAKE (183 aa). Residues 1733–1773 form the EGF-like 19; calcium-binding domain; sequence QAEECGILNGCENGRCVRVREGYTCDCFEGFQLDAAHMACV. An EGF-like 20; calcium-binding domain is found at 1774–1818; that stretch reads DVNECDDLNGPAVLCVHGYCENTEGSYRCHCSPGYVAEAGPPHCT.

It belongs to the LTBP family. In terms of assembly, forms part of the large latent transforming growth factor beta precursor complex; removal is essential for activation of complex. Interacts with SDC4. Interacts (via C-terminal domain) with FBN1 (via N-terminal domain) in a Ca(+2)-dependent manner. Post-translationally, N-Glycosylated. Contains hydroxylated asparagine residues. As to expression, expressed in the aorta (at protein level). Expressed in lung, weakly expressed in heart, placenta, liver and skeletal muscle.

It localises to the secreted. The protein localises to the extracellular space. The protein resides in the extracellular matrix. May play an integral structural role in elastic-fiber architectural organization and/or assembly. The polypeptide is Latent-transforming growth factor beta-binding protein 2 (LTBP2) (Homo sapiens (Human)).